A 1023-amino-acid chain; its full sequence is GATOR2 complex protein WDR24 (1023 aa).

WD repeat units lie at residues 16–54, 64–108, 114–154, 159–199, 203–243, 245–287, and 291–329; these read NLGS…FKVT, SLNY…SKSV, DHSR…NASK, PKSE…IAVE, SHQG…SLNN, STIS…IPLF, and DHRD…KPYQ. Over residues 563-578 the composition is skewed to low complexity; sequence SKNIIDNSNDSNQEIN. Disordered stretches follow at residues 563–621 and 661–824; these read SKNI…EPPS and QKST…SIEN. Positions 584–593 are enriched in acidic residues; that stretch reads KEDEEEDDDN. The span at 661–681 shows a compositional bias: polar residues; sequence QKSTDNISDNNSNVHVNIKRQ. Low complexity predominate over residues 682 to 695; the sequence is NQPTNNNNNNSNID. Basic and acidic residues predominate over residues 696-742; it reads NLEKKSNKSKSTKENKESSLTDQNKQKRNDNKEKIDNNEIDNDNKDN. The span at 743-759 shows a compositional bias: acidic residues; that stretch reads NDDDDNDVDNIGEDNDE. Positions 760 to 812 are enriched in low complexity; it reads INNNNDNNNNNNNNNNNNNNNNNNNNNNNNNNNNNNNNKNNNNDNNNNNNINN. Residues 947–969 form a C4-type zinc finger; that stretch reads ACSSCGKSIPQNSIICEKCNKAS. Residues cysteine 948, cysteine 951, cysteine 962, cysteine 965, cysteine 972, cysteine 975, cysteine 986, cysteine 989, histidine 991, histidine 994, histidine 997, cysteine 1010, cysteine 1014, histidine 1016, and cysteine 1018 each coordinate Zn(2+). The RING-type; atypical zinc-finger motif lies at 970 to 1021; it reads SKCSICRLPVKGMWVWCQGCGHGGHLEHMKSWFIDKNQKSCPTGCTHICTPF.

This sequence belongs to the WD repeat WDR24 family. Probably part of the GATOR complex.

The protein localises to the lysosome membrane. It carries out the reaction S-ubiquitinyl-[E2 ubiquitin-conjugating enzyme]-L-cysteine + [acceptor protein]-L-lysine = [E2 ubiquitin-conjugating enzyme]-L-cysteine + N(6)-ubiquitinyl-[acceptor protein]-L-lysine.. It participates in protein modification; protein ubiquitination. Functionally, as a component of the GATOR complex may function in the amino acid-sensing branch of the TORC1 signaling pathway. The sequence is that of GATOR2 complex protein WDR24 from Dictyostelium discoideum (Social amoeba).